A 203-amino-acid polypeptide reads, in one-letter code: Small ribosomal subunit protein uS4 (203 aa).

Residues 93 to 156 (TRLDNLVFRL…QNLAIVNEAI (64 aa)) form the S4 RNA-binding domain.

It belongs to the universal ribosomal protein uS4 family. As to quaternary structure, part of the 30S ribosomal subunit. Contacts protein S5. The interaction surface between S4 and S5 is involved in control of translational fidelity.

In terms of biological role, one of the primary rRNA binding proteins, it binds directly to 16S rRNA where it nucleates assembly of the body of the 30S subunit. With S5 and S12 plays an important role in translational accuracy. In Lacticaseibacillus casei (strain BL23) (Lactobacillus casei), this protein is Small ribosomal subunit protein uS4.